The sequence spans 269 residues: Pertussis toxin subunit 1 homolog (269 aa).

An N-terminal signal peptide occupies residues 1 to 34; sequence MRCTRAIRQTARTGWLTWLAILAVTAPMTSPAWA.

Belongs to the bacterial exotoxin subunit A family.

This Bordetella parapertussis (strain 12822 / ATCC BAA-587 / NCTC 13253) protein is Pertussis toxin subunit 1 homolog (ptxA).